A 447-amino-acid chain; its full sequence is Beclin-1 (447 aa).

Residues 44-53 (PPLTAAPARP) show a composition bias toward low complexity. The interval 44 to 71 (PPLTAAPARPGDAQEESALSEEAFTEGR) is disordered. Residues 105 to 124 (TMENLSRRLKVTGDLFDIMS) carry the BH3 motif. The stretch at 139–266 (DTLLDQLDTQ…QLDKLKKTNV (128 aa)) forms a coiled coil. The interval 242 to 447 (DELKSVENQM…AWVSSQFYNK (206 aa)) is evolutionary conserved domain (ECD). The interval 422 to 447 (WTKALKFMLTNLKWGLAWVSSQFYNK) is required for membrane-association.

Belongs to the beclin family. In terms of assembly, component of the PI3K (PI3KC3/PI3K-III/class III phosphatidylinositol 3-kinase) complex. In terms of processing, may be proteolytically processed by caspases; the C-terminal fragment(s) may induce apoptosis.

The protein localises to the cytoplasm. It localises to the golgi apparatus. It is found in the trans-Golgi network membrane. The protein resides in the endosome membrane. Its subcellular location is the endoplasmic reticulum membrane. The protein localises to the mitochondrion membrane. It localises to the cytoplasmic vesicle. It is found in the autophagosome. Plays a central role in autophagy. Acts as core subunit of different PI3K complex forms that mediate formation of phosphatidylinositol 3-phosphate and are believed to play a role in multiple membrane trafficking pathways such as initiation of autophagosomes, maturation of autophagosomes and endocytosis. Involved in regulation of degradative endocytic trafficking and required for the abscission step in cytokinesis, probably in the context of PI3KC3-C2. The polypeptide is Beclin-1 (BECN1) (Gallus gallus (Chicken)).